The sequence spans 164 residues: Transcriptional repressor NrdR (164 aa).

The segment at 3 to 34 (CPFCSAQDTKVIDSRLVADGVQIRRRRECLSC) is a zinc-finger region. One can recognise an ATP-cone domain in the interval 49-139 (PRLVKTDGTR…VYRSFQDISE (91 aa)).

This sequence belongs to the NrdR family. The cofactor is Zn(2+).

Functionally, negatively regulates transcription of bacterial ribonucleotide reductase nrd genes and operons by binding to NrdR-boxes. In Alcanivorax borkumensis (strain ATCC 700651 / DSM 11573 / NCIMB 13689 / SK2), this protein is Transcriptional repressor NrdR.